The primary structure comprises 164 residues: Translocator protein homolog (164 aa).

The next 5 membrane-spanning stretches (helical) occupy residues W16–K34, S52–A72, I89–Y106, K112–W132, and K141–L163.

It belongs to the TspO/BZRP family.

The protein localises to the mitochondrion membrane. May play a role in the transport of porphyrins and heme. This is Translocator protein homolog from Schizosaccharomyces pombe (strain 972 / ATCC 24843) (Fission yeast).